The primary structure comprises 389 residues: uncharacterized protein (389 aa).

The signal sequence occupies residues 1–29; the sequence is MQPSFTPSGGKWLSIAVILLVIGLVVGFA.

The protein belongs to the bacterial solute-binding protein 1 family. WtpA subfamily.

This is an uncharacterized protein from Thermoplasma volcanium (strain ATCC 51530 / DSM 4299 / JCM 9571 / NBRC 15438 / GSS1).